The following is a 356-amino-acid chain: Carminomycin 4-O-methyltransferase DnrK (356 aa).

Arginine 153 serves as a coordination point for S-adenosyl-L-methionine. Aspartate 163 serves as a coordination point for substrate. S-adenosyl-L-methionine is bound by residues glycine 187, glutamate 210, 237-238 (DF), and serine 252. Positions 257 and 303 each coordinate substrate.

Belongs to the class I-like SAM-binding methyltransferase superfamily. Cation-independent O-methyltransferase family. In terms of assembly, homodimer and homotetramer in equilibrium.

The catalysed reaction is carminomycin + S-adenosyl-L-methionine = daunorubicin + S-adenosyl-L-homocysteine + H(+). It participates in antibiotic biosynthesis; daunorubicin biosynthesis. It functions in the pathway antibiotic biosynthesis; carminomycin biosynthesis. In terms of biological role, involved in the biosynthesis of the anthracyclines carminomycin and daunorubicin (daunomycin) which are aromatic polyketide antibiotics that exhibit high cytotoxicity and are widely applied in the chemotherapy of a variety of cancers. In vivo, catalyzes the transfer of a methyl group from S-adenosyl-L-methionine to the 4-O-position of carminomycin to form daunorubicin. In vitro, it also methylates the anthracyclines rhodomycin D (10-carbomethoxy-13-deoxycarminomycin) and 13-deoxy-carminomycin at the 4-hydroxyl position. It is quite specific with respect to the length of the carbohydrate chain at the C7 position, but it can accept substrates with bulky substituent at C10 position. The protein is Carminomycin 4-O-methyltransferase DnrK (dnrK) of Streptomyces peucetius.